A 473-amino-acid polypeptide reads, in one-letter code: BTB/POZ domain-containing protein KCTD8 (473 aa).

A disordered region spans residues 1-36 (MALKDTGSGGSTILPISEMVSSSSSPGASAAAAPGP). Low complexity predominate over residues 21 to 35 (SSSSSPGASAAAAPG). One can recognise a BTB domain in the interval 44-122 (EVVELNVGGQ…LRDKQLALPE (79 aa)). Residue Ser78 is modified to Phosphoserine. Arg80 carries the omega-N-methylarginine modification. Positions 326 to 409 (IVSPKQEHED…WIPPPDKRRN (84 aa)) are disordered. The span at 330-346 (KQEHEDRKHDKVTDKGS) shows a compositional bias: basic and acidic residues. Over residues 347-388 (ESGTSCNELSTSSCDSHSEASTPQDNPSSAQQATAHQPNTLT) the composition is skewed to polar residues. Ser410 carries the phosphoserine modification.

In terms of assembly, interacts as a tetramer with GABRB1 and GABRB2.

It is found in the presynaptic cell membrane. The protein resides in the postsynaptic cell membrane. Functionally, auxiliary subunit of GABA-B receptors that determine the pharmacology and kinetics of the receptor response. Increases agonist potency and markedly alter the G-protein signaling of the receptors by accelerating onset and promoting desensitization. The chain is BTB/POZ domain-containing protein KCTD8 (KCTD8) from Homo sapiens (Human).